A 338-amino-acid chain; its full sequence is DNA-directed RNA polymerase subunit alpha (338 aa).

Positions 1-234 (MIHKNWAELI…DQLSIFVNFE (234 aa)) are alpha N-terminal domain (alpha-NTD). The tract at residues 250–338 (FNPLLLKKVD…DLAKRFEDQF (89 aa)) is alpha C-terminal domain (alpha-CTD).

It belongs to the RNA polymerase alpha chain family. In terms of assembly, homodimer. The RNAP catalytic core consists of 2 alpha, 1 beta, 1 beta' and 1 omega subunit. When a sigma factor is associated with the core the holoenzyme is formed, which can initiate transcription.

The enzyme catalyses RNA(n) + a ribonucleoside 5'-triphosphate = RNA(n+1) + diphosphate. In terms of biological role, DNA-dependent RNA polymerase catalyzes the transcription of DNA into RNA using the four ribonucleoside triphosphates as substrates. The protein is DNA-directed RNA polymerase subunit alpha of Cereibacter sphaeroides (strain ATCC 17029 / ATH 2.4.9) (Rhodobacter sphaeroides).